The primary structure comprises 189 residues: Putative manganese efflux pump MntP (189 aa).

A run of 6 helical transmembrane segments spans residues 3–23 (LSATLVLAFAMSMDAFAASIG), 41–61 (LIFGVIEAITPLIGWCIGLFA), 65–85 (ILEWDHWIAFSLLFILGCRMI), 104–124 (FWVLVMTAIATSLDAMAIGVG), 132–152 (IVHTAMAIGLATMIMATLGML), and 165–185 (AEIIGGIVLIGIGFNILYEHI).

This sequence belongs to the MntP (TC 9.B.29) family.

Its subcellular location is the cell inner membrane. Its function is as follows. Probably functions as a manganese efflux pump. This is Putative manganese efflux pump MntP from Yersinia enterocolitica serotype O:8 / biotype 1B (strain NCTC 13174 / 8081).